Consider the following 360-residue polypeptide: MIPRRSCWLILLLNLLNVQSLLDASWWSTVAQLSTALAGHNVKPVCELPGLSPGQAQVCELFKDHMPAVSIGAQNAIQECQRQFTGHRWNCSTHYSTGMLGPIHKMATREAAFTYAILSAGVTHEIGRRCKQGLLTSCGCSDETKPKNVPTDWSWGGCGDNVEYGYKFSRDFIDIREKEHDPKRNHDNGRSLMNRRNNEAGRKILKRHRKPKCKCHGVSGACNMKTCWMQLPSMEQVGKILRNKYDKAIRVQINDRGNLQLLADEATKERKTRALPTDLVFMDDSPDYCRFDRHSGTLGTEGRVCKRGSGGAEGCDSLCCGRGYNTYTQEVKSKCNCKFEWCCKVVCQTCNNVTQVDICK.

Residues 1-37 form the signal peptide; sequence MIPRRSCWLILLLNLLNVQSLLDASWWSTVAQLSTAL. 11 cysteine pairs are disulfide-bonded: Cys80–Cys91, Cys130–Cys138, Cys140–Cys158, Cys213–Cys227, Cys215–Cys222, Cys289–Cys320, Cys305–Cys315, Cys319–Cys359, Cys335–Cys350, Cys337–Cys347, and Cys342–Cys343. An N-linked (GlcNAc...) asparagine glycan is attached at Asn90. Ser219 carries O-palmitoleoyl serine; by mom-1 lipidation. Asn352 carries an N-linked (GlcNAc...) asparagine glycan.

Belongs to the Wnt family. Post-translationally, palmitoleoylation is required for efficient binding to frizzled receptors. Depalmitoleoylation leads to Wnt signaling pathway inhibition. In terms of tissue distribution, expressed in intestine, pharynx, anterior body wall muscle, vulva, some pharyngeal neurons and SMD head neurons. Expressed along the boundary between the intestine and muscle or hypodermis, but is also expressed in the hypodermis in cells including seam cells.

It localises to the secreted. The protein localises to the extracellular space. The protein resides in the extracellular matrix. In terms of biological role, ligand for members of the frizzled family of seven transmembrane receptors. Probable developmental protein. May be a signaling molecule which affects the development of discrete regions of tissues. Is likely to signal over only few cell diameters. Involved in the correct positioning of the developing nerve ring and in axon guidance of SIA and SIB neurons, probably by binding to tyrosine kinase receptor cam-1. In addition, regulates the positioning of some head neuronal cells, muscle arms associated with the nerve ring and the excretory pore. Together with Wnt ligand cwn-1, regulates the migration of CAN, ALM, BDU and HSN neurons during embryogenesis, the migration of QL and QR neuroblast descendants during larval development, and polarity of ALM neurons. May act through the wnt receptor cfz-2 to regulate QR neuroblast descendant migration, and to direct ALM migration. Also plays a role in axon growth and guidance in HSN and male CP neurons. In addition, together with wnt ligand cwn-1, negatively regulates developmental neurite pruning of AIM neurons probably by acting as a ligand for receptor tyrosine kinase cam-1. Through the cam-1 receptor also probably regulates the outgrowth of neurites from RME GABAergic motor neurons. May act redundantly with other Wnt ligands such as cwn-1 and mom-2 to control seam cell polarity. The sequence is that of Protein Wnt-2 from Caenorhabditis elegans.